We begin with the raw amino-acid sequence, 198 residues long: Dephospho-CoA kinase (198 aa).

The DPCK domain maps to 3–198; it reads LIGLTGGIAS…VDALWAGLRG (196 aa). 11–16 contacts ATP; the sequence is ASGKST.

It belongs to the CoaE family.

Its subcellular location is the cytoplasm. It catalyses the reaction 3'-dephospho-CoA + ATP = ADP + CoA + H(+). It functions in the pathway cofactor biosynthesis; coenzyme A biosynthesis; CoA from (R)-pantothenate: step 5/5. Functionally, catalyzes the phosphorylation of the 3'-hydroxyl group of dephosphocoenzyme A to form coenzyme A. The protein is Dephospho-CoA kinase of Leifsonia xyli subsp. xyli (strain CTCB07).